The following is a 584-amino-acid chain: MLLRMSTLLLRTLREDPADAEVPSHRLLLRAGYLRRAAPGGYTWLPLGKLVLDRVAEVIRTEMLAIGDQEVHFPALLPAEPYRTSGRWTEYGDDLITLVDRRGAEHLLAPTHEEPAALLVKELFTSYRDFPVGIFQIQTKFRDEARPRAGLLRGREFLMKDAYSFDLDEAGLQAAYDRHRSAYQKIFARLGLDYAVVHAVSGAMGGSASEEFLATSKIGEDVYVGCTACDHTANTEAVTTLAPPASNPEERPATQVHDTPDTPTIASLVGLANARALAGRDDWAAGDTLKNVVLTIRPPGAAKSELLVIGLPGDREVDLKRVAATLAPATVTVFDGWADHPELVRGYLGPQVMAKLGVRYLVDPRVVPGTAWLTGANEPGRHATNVVCGRDFLPDGTIEAAEVRPGDPCPACRTGQLTLRRGIEIGHIFQLGRRYTDAFTVDVLGPEGQSVRPTMGCYGIGVSRAVAVIAEQHHDERGLVWPTEVAPCDVHLVAAGRGPQVETALGLGNRLAEAGLRVLVDDRGHVSAGVKFTDAELVGIPRTVVVGRRLADGYAEVRDRPSGKRADVRVDALVEHLVNEVHSG.

The interval 242-261 (APPASNPEERPATQVHDTPD) is disordered.

This sequence belongs to the class-II aminoacyl-tRNA synthetase family. ProS type 1 subfamily. Homodimer.

The protein localises to the cytoplasm. It catalyses the reaction tRNA(Pro) + L-proline + ATP = L-prolyl-tRNA(Pro) + AMP + diphosphate. Catalyzes the attachment of proline to tRNA(Pro) in a two-step reaction: proline is first activated by ATP to form Pro-AMP and then transferred to the acceptor end of tRNA(Pro). As ProRS can inadvertently accommodate and process non-cognate amino acids such as alanine and cysteine, to avoid such errors it has two additional distinct editing activities against alanine. One activity is designated as 'pretransfer' editing and involves the tRNA(Pro)-independent hydrolysis of activated Ala-AMP. The other activity is designated 'posttransfer' editing and involves deacylation of mischarged Ala-tRNA(Pro). The misacylated Cys-tRNA(Pro) is not edited by ProRS. The polypeptide is Proline--tRNA ligase (Salinispora arenicola (strain CNS-205)).